The chain runs to 699 residues: Nucleolar and coiled-body phosphoprotein 1 (699 aa).

Residues 10–42 (VPSDLYPLVLGFLRDNQLSEVANKFAKATGATQ) enclose the LisH domain. An N6-acetyllysine modification is found at Lys-33. The disordered stretch occupies residues 65–637 (ERKLQANGPV…VREEEIEVDS (573 aa)). Residues Lys-67 and Lys-76 each participate in a glycyl lysine isopeptide (Lys-Gly) (interchain with G-Cter in SUMO2) cross-link. The stretch at 84 to 95 (SSDSEDSSEEEE) is one Acidic serine cluster 1 repeat. The tract at residues 84 to 566 (SSDSEDSSEE…GKAAKNSEEE (483 aa)) is 11 X 12 AA approximate repeats of an acidic serine cluster. Residues 86–97 (DSEDSSEEEEEV) show a composition bias toward acidic residues. 3 positions are modified to phosphoserine: Ser-87, Ser-90, and Ser-91. Ser-91 bears the Diphosphoserine mark. Low complexity predominate over residues 100 to 110 (PPAKKAAVPAK). The Acidic serine cluster 2 repeat unit spans residues 125–136 (ESSSSEESSDDD). Residues 144–159 (QPVQKGVKPQAKAAKA) are compositionally biased toward low complexity. Residues 167 to 178 (SDSDSDSSSEDE) form an Acidic serine cluster 3 repeat. Lys-186 is covalently cross-linked (Glycyl lysine isopeptide (Lys-Gly) (interchain with G-Cter in SUMO2)). At Thr-188 the chain carries Phosphothreonine. Lys-193 is covalently cross-linked (Glycyl lysine isopeptide (Lys-Gly) (interchain with G-Cter in SUMO2)). Composition is skewed to low complexity over residues 193–227 (KAQT…SSSS) and 236–261 (AATP…TTPT). Positions 204–382 (RAAPKIANGK…DDEAPSKPAG (179 aa)) are interaction with RPA194. The Acidic serine cluster 4 repeat unit spans residues 221 to 232 (SSSSSSSDDSEE). An Acidic serine cluster 5 repeat occupies 264–275 (SSSSEDSSSDEE). A compositionally biased stretch (pro residues) spans 291-301 (SVPPPSAPPPK). The span at 321–333 (SSEDSSDESDSSS) shows a compositional bias: acidic residues. An Acidic serine cluster 6 repeat occupies 325 to 336 (SSDESDSSSEEE). Glycyl lysine isopeptide (Lys-Gly) (interchain with G-Cter in SUMO2) cross-links involve residues Lys-342 and Lys-347. Ser-362, Ser-363, and Ser-366 each carry phosphoserine. The stretch at 363–375 (SDSSDSDSSEDDE) is one Acidic serine cluster 7 repeat. Positions 366–375 (SDSDSSEDDE) are enriched in acidic residues. Residues 381–397 (AGTTKNSSNKPAVTTKS) show a composition bias toward polar residues. Glycyl lysine isopeptide (Lys-Gly) (interchain with G-Cter in SUMO2) cross-links involve residues Lys-390 and Lys-396. Phosphoserine is present on Ser-397. Residues 398–409 (PAVKPAAAPKQP) are compositionally biased toward low complexity. Residues Lys-401 and Lys-407 each participate in a glycyl lysine isopeptide (Lys-Gly) (interchain with G-Cter in SUMO2) cross-link. Lys-415 is subject to N6-acetyllysine; alternate. Lys-415 is covalently cross-linked (Glycyl lysine isopeptide (Lys-Gly) (interchain with G-Cter in SUMO1); alternate). Lys-415 participates in a covalent cross-link: Glycyl lysine isopeptide (Lys-Gly) (interchain with G-Cter in SUMO2); alternate. Residues 425–436 (SSEEESSSSEEE) form an Acidic serine cluster 8 repeat. Glycyl lysine isopeptide (Lys-Gly) (interchain with G-Cter in SUMO2) cross-links involve residues Lys-440 and Lys-452. Composition is skewed to low complexity over residues 441–476 (MVAT…SDSS) and 498–523 (AGGA…SSSD). Ser-456 is modified (phosphoserine). The stretch at 470 to 481 (SSDSDSSSSEEE) is one Acidic serine cluster 9 repeat. Lys-505 participates in a covalent cross-link: Glycyl lysine isopeptide (Lys-Gly) (interchain with G-Cter in SUMO2). Position 508 is a phosphoserine (Ser-508). The Acidic serine cluster 10 repeat unit spans residues 519-529 (SSSSDDSSEEE). Residue Ser-538 is modified to Phosphoserine. The segment covering 547–556 (NGTSALTAQN) has biased composition (polar residues). One copy of the Acidic serine cluster 11 repeat lies at 555 to 566 (QNGKAAKNSEEE). A Phosphoserine modification is found at Ser-563. Lys-572 is covalently cross-linked (Glycyl lysine isopeptide (Lys-Gly) (interchain with G-Cter in SUMO1)). Lys-579 is covalently cross-linked (Glycyl lysine isopeptide (Lys-Gly) (interchain with G-Cter in SUMO2)). Phosphoserine is present on residues Ser-580 and Ser-582. Residue Lys-604 forms a Glycyl lysine isopeptide (Lys-Gly) (interchain with G-Cter in SUMO2) linkage. Phosphothreonine is present on residues Thr-607 and Thr-610. Lys-613 participates in a covalent cross-link: Glycyl lysine isopeptide (Lys-Gly) (interchain with G-Cter in SUMO2). Ser-622 is modified (phosphoserine). A compositionally biased stretch (basic and acidic residues) spans 627 to 637 (RVREEEIEVDS). Ser-643 bears the Phosphoserine mark. A Glycyl lysine isopeptide (Lys-Gly) (interchain with G-Cter in SUMO2) cross-link involves residue Lys-647. The residue at position 663 (Lys-663) is an N6-acetyllysine; alternate. Residue Lys-663 forms a Glycyl lysine isopeptide (Lys-Gly) (interchain with G-Cter in SUMO2); alternate linkage. At Arg-683 the chain carries Omega-N-methylarginine. Residue Ser-686 is modified to Phosphoserine. Lys-695 is covalently cross-linked (Glycyl lysine isopeptide (Lys-Gly) (interchain with G-Cter in SUMO2)). Ser-698 is modified (phosphoserine).

This sequence belongs to the NOLC1 family. In terms of assembly, heterodimer; heterodimerizes with TCOF1 following monoubiquitination. Interacts with RNA polymerase I 194 kDa subunit (RPA194) and with casein kinase-II. Interacts with DKC1/NAP57, NOP58 and fibrillarin. In terms of processing, undergoes rapid and massive phosphorylation/dephosphorylation cycles on CK2 and PKC sites. NOLC1 is one of the mostly phosphorylated proteins in the cell. Post-translationally, ubiquitinated. Monoubiquitination by the BCR(KBTBD8) complex promotes the formation of a NOLC1-TCOF1 complex that acts as a platform to connect RNA polymerase I with enzymes responsible for ribosomal processing and modification, leading to remodel the translational program of differentiating cells in favor of neural crest specification. Pyrophosphorylated by 5-diphosphoinositol pentakisphosphate (5-IP7). Serine pyrophosphorylation is achieved by Mg(2+)-dependent, but enzyme independent transfer of a beta-phosphate from a inositol pyrophosphate to a pre-phosphorylated serine residue.

Its subcellular location is the nucleus. It localises to the nucleolus. The protein localises to the cytoplasm. Its function is as follows. Nucleolar protein that acts as a regulator of RNA polymerase I by connecting RNA polymerase I with enzymes responsible for ribosomal processing and modification. Required for neural crest specification: following monoubiquitination by the BCR(KBTBD8) complex, associates with TCOF1 and acts as a platform to connect RNA polymerase I with enzymes responsible for ribosomal processing and modification, leading to remodel the translational program of differentiating cells in favor of neural crest specification. Involved in nucleologenesis, possibly by playing a role in the maintenance of the fundamental structure of the fibrillar center and dense fibrillar component in the nucleolus. It has intrinsic GTPase and ATPase activities. The polypeptide is Nucleolar and coiled-body phosphoprotein 1 (Homo sapiens (Human)).